Here is a 531-residue protein sequence, read N- to C-terminus: Pyruvate kinase (531 aa).

Substrate is bound at residue Arg86. Residues Asn88, Ser90, Asp121, and Thr122 each contribute to the K(+) site. Position 88–91 (88–91 (NFSH)) interacts with ATP. ATP contacts are provided by Arg128 and Lys211. Mg(2+) is bound at residue Glu277. Residues Gly300, Asp301, and Thr333 each coordinate substrate. Position 301 (Asp301) interacts with Mg(2+).

It belongs to the pyruvate kinase family. As to quaternary structure, homotetramer. The cofactor is Mg(2+). It depends on K(+) as a cofactor.

The catalysed reaction is pyruvate + ATP = phosphoenolpyruvate + ADP + H(+). Its pathway is carbohydrate degradation; glycolysis; pyruvate from D-glyceraldehyde 3-phosphate: step 5/5. This is Pyruvate kinase (PYK) from Eimeria tenella (Coccidian parasite).